Consider the following 251-residue polypeptide: Ribonuclease 3 (251 aa).

Residues 3–125 (LATLETRLGH…LFGAVFLDAG (123 aa)) form the RNase III domain. Glu-38 lines the Mg(2+) pocket. Asp-42 is a catalytic residue. Positions 111 and 114 each coordinate Mg(2+). Glu-114 is an active-site residue. The 71-residue stretch at 152-222 (DAKTLLQEFL…AKLALEAALV (71 aa)) folds into the DRBM domain.

Belongs to the ribonuclease III family. As to quaternary structure, homodimer. The cofactor is Mg(2+).

Its subcellular location is the cytoplasm. It catalyses the reaction Endonucleolytic cleavage to 5'-phosphomonoester.. Its function is as follows. Digests double-stranded RNA. Involved in the processing of primary rRNA transcript to yield the immediate precursors to the large and small rRNAs (23S and 16S). Processes some mRNAs, and tRNAs when they are encoded in the rRNA operon. Processes pre-crRNA and tracrRNA of type II CRISPR loci if present in the organism. In Bordetella avium (strain 197N), this protein is Ribonuclease 3.